The sequence spans 177 residues: R-phycoerythrin beta chain (177 aa).

The phycourobilin site is built by C50 and C61. N72 carries the N4-methylasparagine modification. Residues C82 and C158 each contribute to the (2R,3E)-phycoerythrobilin site.

This sequence belongs to the phycobiliprotein family. As to quaternary structure, heterodimer of an alpha and a beta chain. In terms of processing, contains two covalently linked phycoerythrobilin chromophores and one covalently linked phycourobilin chromophore.

The protein resides in the plastid. It is found in the chloroplast thylakoid membrane. Its function is as follows. Light-harvesting photosynthetic bile pigment-protein from the phycobiliprotein complex. The sequence is that of R-phycoerythrin beta chain (cpeB) from Porphyra purpurea (Red seaweed).